A 584-amino-acid polypeptide reads, in one-letter code: MGKTYSSPVNPIPKAPKGLAIHHWLNFLQAAYRLQPGPSEFDFHQLRKFLKLAIKTPVWLNPINYSVLARLIPKNYPGRVHEIVAILIQETPAREAPPSAPPADDPQKPPPYPEHAQVEPQCLPVLHPHGAPATHRPWQMKDLQAIKQEVSSSAPGSPQFMQTVRLAVQQFDPTAKDLHDLLQYLCSSLVASLHHQQLETLIAQAETQGITGYNPLAGPLRVQANNPNQQGLRREYQNLWLSAFSALPGNTKDPTWAAILQGPEEPFCSFVERLNVALDNGLPEGTPKDPILRSLAYSNANKECQKLLQARGQTNSPLGEMLRACQTWTPRDKNKILMIQPKKTPPPNQPCFRCGQAGHWSRDCKQPRPPPGPCPLCQDPAHWKQDCPQLKADTKGSEDLLLDLPCEASHVRERKNLLRGGGLTSPRTILPLIPLSQQRQPILHVQVSFSNTSPVGVQALLDTGADITVLPAYLCPPDSNLQDTTVLGAGGPSTSKFKILPRPVHIHLPFRKQPVTLTSCLIDTNDQWTILGRDALQQCQSSLYLADQPSSVLPVQTPKLIGLEHLPPPPEVSQFPLNRSASRP.

The N-myristoyl glycine; by host moiety is linked to residue Gly2. The interval 93 to 117 (AREAPPSAPPADDPQKPPPYPEHAQ) is disordered. Residues 98–101 (PSAP) carry the PTAP/PSAP motif motif. Pro residues predominate over residues 98–113 (PSAPPADDPQKPPPYP). The short motif at 109–112 (PPPY) is the PPXY motif element. 2 CCHC-type zinc fingers span residues 349–366 (QPCFRCGQAGHWSRDCKQ) and 372–389 (GPCPLCQDPAHWKQDCPQ). Residues 457–535 (VQALLDTGAD…DQWTILGRDA (79 aa)) enclose the Peptidase A2 domain. Catalysis depends on Asp462, which acts as the For protease activity; shared with dimeric partner. Residues 564–584 (EHLPPPPEVSQFPLNRSASRP) are disordered. Residues 575–584 (FPLNRSASRP) are compositionally biased toward polar residues.

In terms of assembly, interacts with human TSG101. This interaction is essential for budding and release of viral particles. Specific enzymatic cleavages by the viral protease yield mature proteins. The polyprotein is cleaved during and after budding, this process is termed maturation. The protease is autoproteolytically processed at its N- and C-termini.

It localises to the virion. Matrix protein p19 targets Gag, Gag-Pro and Gag-Pro-Pol polyproteins to the plasma membrane via a multipartite membrane binding signal, that includes its myristoylated N-terminus. Also mediates nuclear localization of the preintegration complex. Functionally, capsid protein p24 forms the conical core of the virus that encapsulates the genomic RNA-nucleocapsid complex. Its function is as follows. Nucleocapsid protein p15 is involved in the packaging and encapsidation of two copies of the genome. In terms of biological role, the aspartyl protease mediates proteolytic cleavages of Gag, Gag-Pro and Gag-Pro-Pol polyproteins during or shortly after the release of the virion from the plasma membrane. Cleavages take place as an ordered, step-wise cascade to yield mature proteins. This process is called maturation. Displays maximal activity during the budding process just prior to particle release from the cell. Hydrolyzes host EIF4GI in order to shut off the capped cellular mRNA translation. The resulting inhibition of cellular protein synthesis serves to ensure maximal viral gene expression and to evade host immune response. The sequence is that of Gag-Pro polyprotein (gag-pro) from Human T-cell leukemia virus 3 (strain Pyl43) (HTLV-3).